Consider the following 50-residue polypeptide: Omwaprin-a (50 aa).

The 45-residue stretch at Arg3–Ile47 folds into the WAP domain. Intrachain disulfides connect Cys10-Cys35, Cys18-Cys39, Cys22-Cys34, and Cys28-Cys43.

This sequence belongs to the venom waprin family. As to expression, expressed by the venom gland.

It localises to the secreted. Functionally, damages membranes of susceptible bacteria. Has antibacterial activity against the Gram-positive bacteria B.megaterium and S.warneri. After a 45-minute treatment with this protein, B.megaterium have no visible pili and are smooth. Has no antibacterial activity against the Gram-positive bacteria B.thuringiensis, S.aureus, S.clavuligerus and B.anthracis, or the Gram-negative bacteria E.coli and A.tumefaciens. Has no hemolytic activity. Does not inhibit the proteinases elastase and cathepsin G. Is not toxic to mice. The protein is Omwaprin-a of Oxyuranus microlepidotus (Inland taipan).